The sequence spans 123 residues: Large ribosomal subunit protein uL14 (123 aa).

It belongs to the universal ribosomal protein uL14 family. As to quaternary structure, part of the 50S ribosomal subunit. Forms a cluster with proteins L3 and L19. In the 70S ribosome, L14 and L19 interact and together make contacts with the 16S rRNA in bridges B5 and B8.

Its function is as follows. Binds to 23S rRNA. Forms part of two intersubunit bridges in the 70S ribosome. This Actinobacillus pleuropneumoniae serotype 7 (strain AP76) protein is Large ribosomal subunit protein uL14.